A 181-amino-acid chain; its full sequence is Large ribosomal subunit protein uL6 (181 aa).

The protein belongs to the universal ribosomal protein uL6 family. In terms of assembly, part of the 50S ribosomal subunit.

In terms of biological role, this protein binds to the 23S rRNA, and is important in its secondary structure. It is located near the subunit interface in the base of the L7/L12 stalk, and near the tRNA binding site of the peptidyltransferase center. This Synechococcus sp. (strain JA-2-3B'a(2-13)) (Cyanobacteria bacterium Yellowstone B-Prime) protein is Large ribosomal subunit protein uL6.